We begin with the raw amino-acid sequence, 268 residues long: tRNA pseudouridine synthase A (268 aa).

The active-site Nucleophile is aspartate 52. Tyrosine 113 is a substrate binding site.

It belongs to the tRNA pseudouridine synthase TruA family. In terms of assembly, homodimer.

The enzyme catalyses uridine(38/39/40) in tRNA = pseudouridine(38/39/40) in tRNA. Its function is as follows. Formation of pseudouridine at positions 38, 39 and 40 in the anticodon stem and loop of transfer RNAs. This is tRNA pseudouridine synthase A from Chlamydia abortus (strain DSM 27085 / S26/3) (Chlamydophila abortus).